A 196-amino-acid polypeptide reads, in one-letter code: Charged multivesicular body protein 1a (196 aa).

M1 is modified (N-acetylmethionine). Residues 5–47 (LFQLKFTAKQLEKLAKKAEKDSKAEQAKVKKALLQKNVECARV) adopt a coiled-coil conformation. At S101 the chain carries Phosphoserine. A coiled-coil region spans residues 102–124 (TMDLQKVSSVMDRFEQQVQNLDV). Residue S173 is modified to Phosphoserine. Residues 173 to 196 (SAVGESSVRSQEDQLSRRLAALRN) form a disordered region. Positions 185-195 (DQLSRRLAALR) match the MIT-interacting motif motif.

Belongs to the SNF7 family. Probable peripherally associated component of the endosomal sorting required for transport complex III (ESCRT-III). ESCRT-III components are thought to multimerize to form a flat lattice on the perimeter membrane of the endosome. Several assembly forms of ESCRT-III may exist that interact and act sequentially. Self-associates. Interacts with CHMP1B. Interacts with VPS4A. Interacts with VPS4B. Interacts with PHF1. Interacts with IST1. Interacts with MITD1. In terms of tissue distribution, expressed in placenta, cultured skin fibroblasts and in osteoblast cell line MG-63.

The protein localises to the cytoplasm. It localises to the endosome membrane. The protein resides in the nucleus matrix. In terms of biological role, probable peripherally associated component of the endosomal sorting required for transport complex III (ESCRT-III) which is involved in multivesicular bodies (MVBs) formation and sorting of endosomal cargo proteins into MVBs. MVBs contain intraluminal vesicles (ILVs) that are generated by invagination and scission from the limiting membrane of the endosome and mostly are delivered to lysosomes enabling degradation of membrane proteins, such as stimulated growth factor receptors, lysosomal enzymes and lipids. The MVB pathway appears to require the sequential function of ESCRT-O, -I,-II and -III complexes. ESCRT-III proteins mostly dissociate from the invaginating membrane before the ILV is released. The ESCRT machinery also functions in topologically equivalent membrane fission events, such as the terminal stages of cytokinesis and the budding of enveloped viruses (HIV-1 and other lentiviruses). ESCRT-III proteins are believed to mediate the necessary vesicle extrusion and/or membrane fission activities, possibly in conjunction with the AAA ATPase VPS4. Involved in cytokinesis. Involved in recruiting VPS4A and/or VPS4B to the midbody of dividing cells. May also be involved in chromosome condensation. Targets the Polycomb group (PcG) protein BMI1/PCGF4 to regions of condensed chromatin. May play a role in stable cell cycle progression and in PcG gene silencing. In Homo sapiens (Human), this protein is Charged multivesicular body protein 1a (CHMP1A).